We begin with the raw amino-acid sequence, 458 residues long: uncharacterized protein (458 aa).

This is an uncharacterized protein from Bacillus subtilis (strain 168).